The sequence spans 482 residues: Cardiolipin synthase (482 aa).

A run of 2 helical transmembrane segments spans residues 4 to 24 (LAYLLVILLILNVFFAAVTVF) and 34 to 54 (WAWLLVLTFVPIFGFIIYLIF). PLD phosphodiesterase domains lie at 217-244 (LNYRNHRKLAIIDGDVGYIGGFNIGDEY) and 395-422 (DNGFIHAKTLVVDGEIASVGTANMDFRS). Active-site residues include histidine 222, lysine 224, aspartate 229, histidine 400, lysine 402, and aspartate 407.

It belongs to the phospholipase D family. Cardiolipin synthase subfamily.

It localises to the cell membrane. It catalyses the reaction 2 a 1,2-diacyl-sn-glycero-3-phospho-(1'-sn-glycerol) = a cardiolipin + glycerol. In terms of biological role, catalyzes the reversible phosphatidyl group transfer from one phosphatidylglycerol molecule to another to form cardiolipin (CL) (diphosphatidylglycerol) and glycerol. The chain is Cardiolipin synthase (cls) from Listeria monocytogenes serotype 4a (strain HCC23).